A 382-amino-acid chain; its full sequence is Fetuin-B (382 aa).

Residues 1-15 (MGLLLPLALCILVLC) form the signal peptide. Cystatin fetuin-B-type domains are found at residues 25-138 (ALNP…YNCT) and 149-255 (MTCP…VTCD). N37 is a glycosylation site (N-linked (GlcNAc...) asparagine). Disulfide bonds link C93/C104, C117/C137, and C151/C154. Residue N136 is glycosylated (N-linked (GlcNAc...) asparagine). Residue N182 is glycosylated (N-linked (GlcNAc...) asparagine). Cystine bridges form between C216–C224 and C237–C254. Composition is skewed to polar residues over residues 262 to 276 (PATG…QKPT) and 286 to 295 (QKNTPPTDSP). Disordered regions lie at residues 262 to 320 (PATG…EKGP) and 363 to 382 (ARTA…VLPP). O-linked (GalNAc...) threonine glycosylation is found at T289 and T292. Over residues 310 to 320 (LDDKNSQEKGP) the composition is skewed to basic and acidic residues. A Phosphoserine modification is found at S315.

This sequence belongs to the fetuin family. As to expression, liver and testis.

The protein localises to the secreted. In terms of biological role, protease inhibitor required for egg fertilization. Required to prevent premature zona pellucida hardening before fertilization, probably by inhibiting the protease activity of ASTL, a protease that mediates the cleavage of ZP2 and triggers zona pellucida hardening. The protein is Fetuin-B (FETUB) of Homo sapiens (Human).